The primary structure comprises 413 residues: Glutaminase (413 aa).

Residues 23–307 are glutaminase; that stretch reads GELADYIPEL…LSDDMGLHLM (285 aa). Residues Ser65, Asn114, Glu160, Asn167, Tyr191, Tyr243, and Val261 each coordinate substrate. One can recognise an STAS domain in the interval 316–413; sequence AVRSITRDGD…SDGTICKERV (98 aa).

It belongs to the glutaminase family. As to quaternary structure, homotetramer.

It carries out the reaction L-glutamine + H2O = L-glutamate + NH4(+). This Corynebacterium glutamicum (strain ATCC 13032 / DSM 20300 / JCM 1318 / BCRC 11384 / CCUG 27702 / LMG 3730 / NBRC 12168 / NCIMB 10025 / NRRL B-2784 / 534) protein is Glutaminase (glsA).